A 396-amino-acid polypeptide reads, in one-letter code: Putative nickel insertion protein (396 aa).

Residues Arg333–Val355 form a disordered region.

This sequence belongs to the LarC family.

The sequence is that of Putative nickel insertion protein from Rhodopirellula baltica (strain DSM 10527 / NCIMB 13988 / SH1).